The sequence spans 390 residues: 23S rRNA (uracil(747)-C(5))-methyltransferase RlmC (390 aa).

C12, C20, C23, and C100 together coordinate [4Fe-4S] cluster. Positions 225, 254, 275, and 322 each coordinate S-adenosyl-L-methionine. The active-site Nucleophile is C349.

It belongs to the class I-like SAM-binding methyltransferase superfamily. RNA M5U methyltransferase family. RlmC subfamily.

The catalysed reaction is uridine(747) in 23S rRNA + S-adenosyl-L-methionine = 5-methyluridine(747) in 23S rRNA + S-adenosyl-L-homocysteine + H(+). In terms of biological role, catalyzes the formation of 5-methyl-uridine at position 747 (m5U747) in 23S rRNA. The protein is 23S rRNA (uracil(747)-C(5))-methyltransferase RlmC of Shewanella baltica (strain OS185).